We begin with the raw amino-acid sequence, 286 residues long: MIGKPRGRRGVNLQILPSAMTVLSICAGLTAIKFALEHQPKAAMALIAAAAILDGLDGRVARILDAQSRMGAEIDSLADAVNFGVTPALVLYVSMLSKWPVGWVVVLLYAVCVVLRLARYNALQDDGTQPAYAHEFFVGMPAPAGAVSMIGLLALKMQFGEGWWTSVWFLSFWVTGTSILLVSGIPMKKMHAVSVPPNYAAALLAVLAICAAAAVLAPYLLIWVIIIAYMCHIPFAVRSQRWLAQHPEVWDDKPKQRRAVRRASRRAHPYRPSMARLGLRKPGRRL.

5 helical membrane-spanning segments follow: residues I15–A35, M95–L115, E135–L155, V167–M187, and L207–I227.

Belongs to the CDP-alcohol phosphatidyltransferase class-I family.

The protein resides in the cell membrane. The catalysed reaction is a CDP-1,2-diacyl-sn-glycerol + L-serine = a 1,2-diacyl-sn-glycero-3-phospho-L-serine + CMP + H(+). This chain is CDP-diacylglycerol--serine O-phosphatidyltransferase (pssA), found in Mycobacterium bovis (strain ATCC BAA-935 / AF2122/97).